Here is a 417-residue protein sequence, read N- to C-terminus: Serine hydroxymethyltransferase 1 (417 aa).

(6S)-5,6,7,8-tetrahydrofolate contacts are provided by residues L121 and 125–127 (GHL). K229 carries the post-translational modification N6-(pyridoxal phosphate)lysine. Position 354–356 (354–356 (SPF)) interacts with (6S)-5,6,7,8-tetrahydrofolate.

This sequence belongs to the SHMT family. In terms of assembly, homodimer. Pyridoxal 5'-phosphate is required as a cofactor.

The protein localises to the cytoplasm. The enzyme catalyses (6R)-5,10-methylene-5,6,7,8-tetrahydrofolate + glycine + H2O = (6S)-5,6,7,8-tetrahydrofolate + L-serine. The protein operates within one-carbon metabolism; tetrahydrofolate interconversion. It participates in amino-acid biosynthesis; glycine biosynthesis; glycine from L-serine: step 1/1. Its function is as follows. Catalyzes the reversible interconversion of serine and glycine with tetrahydrofolate (THF) serving as the one-carbon carrier. This reaction serves as the major source of one-carbon groups required for the biosynthesis of purines, thymidylate, methionine, and other important biomolecules. Also exhibits THF-independent aldolase activity toward beta-hydroxyamino acids, producing glycine and aldehydes, via a retro-aldol mechanism. In Pseudomonas fluorescens (strain ATCC BAA-477 / NRRL B-23932 / Pf-5), this protein is Serine hydroxymethyltransferase 1.